The following is a 290-amino-acid chain: Protease HtpX (290 aa).

Helical transmembrane passes span 6-26 (LFLV…NILF) and 36-56 (ISGL…ISLL). Histidine 143 provides a ligand contact to Zn(2+). Residue glutamate 144 is part of the active site. A Zn(2+)-binding site is contributed by histidine 147. Helical transmembrane passes span 158-178 (LIQG…AGVI) and 200-220 (ITVF…VMWF). Zn(2+) is bound at residue glutamate 225.

This sequence belongs to the peptidase M48B family. The cofactor is Zn(2+).

It localises to the cell inner membrane. The protein is Protease HtpX of Aeromonas hydrophila subsp. hydrophila (strain ATCC 7966 / DSM 30187 / BCRC 13018 / CCUG 14551 / JCM 1027 / KCTC 2358 / NCIMB 9240 / NCTC 8049).